We begin with the raw amino-acid sequence, 353 residues long: Stomatin-like protein 2, mitochondrial (353 aa).

A mitochondrion-targeting transit peptide spans 1–28 (MLARAARGTGALLLRGSVQASGRIPRRA). S17 carries the phosphoserine; by PKC/PRKCZ modification. The residue at position 124 (Y124) is a Phosphotyrosine. Residue K145 is modified to N6-acetyllysine; alternate. Position 145 is an N6-succinyllysine; alternate (K145). The stretch at 215 to 252 (INVAEGKKQAQILASEAEKAEQINQAAGEASAVLAKAK) forms a coiled coil. At K233 the chain carries N6-acetyllysine. The interval 324 to 353 (VPGAQNSSEARRDVQTTDTSIEELGRVKLS) is disordered. S330 carries the phosphoserine modification.

The protein belongs to the band 7/mec-2 family. Forms homooligomers. Interacts with MFN2; may form heterooligomers. Interacts with PHB1 and PHB2; recruits them to cardiolipin-enriched mitochondrial membranes and stabilizes them. Interacts with CACNA2D2.

The protein resides in the cell membrane. The protein localises to the mitochondrion. Its subcellular location is the mitochondrion inner membrane. It is found in the mitochondrion intermembrane space. It localises to the membrane raft. The protein resides in the cytoplasm. The protein localises to the cytoskeleton. Mitochondrial protein that probably regulates the biogenesis and the activity of mitochondria. Stimulates cardiolipin biosynthesis, binds cardiolipin-enriched membranes where it recruits and stabilizes some proteins including prohibitin and may therefore act in the organization of functional microdomains in mitochondrial membranes. Through regulation of the mitochondrial function may play a role into several biological processes including cell migration, cell proliferation, T-cell activation, calcium homeostasis and cellular response to stress. May play a role in calcium homeostasis through negative regulation of calcium efflux from mitochondria. Required for mitochondrial hyperfusion a pro-survival cellular response to stress which results in increased ATP production by mitochondria. May also regulate the organization of functional domains at the plasma membrane and play a role in T-cell activation through association with the T-cell receptor signaling complex and its regulation. This is Stomatin-like protein 2, mitochondrial (Stoml2) from Rattus norvegicus (Rat).